Consider the following 535-residue polypeptide: Solute carrier family 22 member 7 (535 aa).

The next 12 helical transmembrane spans lie at 21–41 (LVLM…PVFM), 144–164 (ITST…GYLS), 178–198 (VSSL…MFVV), 202–222 (LTGS…LEWL), 232–252 (VIST…GYLI), 257–277 (WLLL…WWVP), 344–364 (ISLC…GLTL), 375–395 (QTQL…YFLV), 402–422 (LTEA…LLVS), 429–449 (ITAL…TAYL), 464–484 (LGLT…AALL), and 489–509 (LLLP…TALL).

Belongs to the major facilitator (TC 2.A.1) superfamily. Organic cation transporter (TC 2.A.1.19) family. Expressed in liver and kidney. Expressed at low levels in adipose tissue. Expressed in fetal liver. In kidney, expressed at the brush border of the proximal tubule S3 segment (S3) in the outer stripe and medullary rays. In kidney, expression is higher in female than male.

The protein resides in the basolateral cell membrane. The protein localises to the apical cell membrane. Its subcellular location is the cell membrane. It carries out the reaction orotate(out) + L-glutamate(in) = orotate(in) + L-glutamate(out). The catalysed reaction is 3',5'-cyclic GMP(in) = 3',5'-cyclic GMP(out). It catalyses the reaction GMP(in) = GMP(out). The enzyme catalyses 2'-deoxyguanosine(in) = 2'-deoxyguanosine(out). It carries out the reaction GDP(in) = GDP(out). The catalysed reaction is guanosine(in) = guanosine(out). It catalyses the reaction GTP(in) = GTP(out). The enzyme catalyses 3',5'-cyclic AMP(in) = 3',5'-cyclic AMP(out). It carries out the reaction creatinine(in) = creatinine(out). The catalysed reaction is prostaglandin E2(out) = prostaglandin E2(in). It catalyses the reaction 2-oxoglutarate(in) = 2-oxoglutarate(out). The enzyme catalyses glutarate(in) = glutarate(out). It carries out the reaction urate(out) = urate(in). The catalysed reaction is estrone 3-sulfate(out) = estrone 3-sulfate(in). In terms of biological role, functions as a Na(+)-independent bidirectional multispecific transporter. Contributes to the renal and hepatic elimination of endogenous organic compounds from the systemic circulation into the urine and bile, respectively. Capable of transporting a wide range of purine and pyrimidine nucleobases, nucleosides, and nucleotides with cGMP, 2'deoxyguanosine and GMP being the preferred substrates. Functions as a pH- and chloride-independent cGMP bidirectional facilitative transporter that can regulate both intracellular and extracellular levels of cGMP and may be involved in cGMP signaling pathways. Mediates orotate/glutamate bidirectional exchange and most likely display a physiological role in hepatic release of glutamate into the blood. Involved in renal secretion and possible reabsorption of creatinine. Able to uptake prostaglandin E2 (PGE2) and may contribute to PGE2 renal excretion. Also transports alpha-ketoglutarate and urate. Apart from the orotate/glutamate exchange, the counterions for the uptake of other SLC22A7/OAT2 substrates remain to be identified. The protein is Solute carrier family 22 member 7 of Rattus norvegicus (Rat).